A 321-amino-acid chain; its full sequence is Polyprenyl transferase cle5 (321 aa).

9 consecutive transmembrane segments (helical) span residues 26–46 (PLLA…HKIT), 57–77 (VLSQ…AGMV), 107–127 (EALV…SWML), 132–149 (VQAA…YPFA), 159–179 (IYPQ…GTLA), 189–209 (LWAS…WTLY), 232–252 (VLAG…VLGA), 262–282 (SQWL…GQLV), and 300–320 (FALG…GGNG).

The protein belongs to the UbiA prenyltransferase family. Requires Mg(2+) as cofactor.

It is found in the membrane. It functions in the pathway secondary metabolite biosynthesis; terpenoid biosynthesis. Its function is as follows. Polyprenyl transferase; part of the cluster A that mediates the biosynthesis of chevalone E and its oxidized derivatives that possess a unique five-membered lactone ring and can synergistically enhance the cytotoxicity of doxorubicin (DOX) in breast cancer cells. Within the pathway, cle5 takes part to the biosynthesis of the molecular scaffold by catalyzing the C-3 geranylgeranylation reaction of triacetic acid lactone (TAL) produced by cle1. The molecular scaffold is commonly biosynthesized by a series of enzymes including the non-reducing polyketide synthase (NR-PKS) cle1 that produces the alpha-pyrone triacetic acid lactone (TAL); The membrane-bound prenyltransferase cle5 that accepts TAL as its substrate to perform a C-3 geranylgeranylation reaction, in which the pathway-dedicated GGPS cle6 is required to provide GGPP, the other substrate of cle5; the FAD-dependent monooxygenase Cle3 that forms an (S)-epoxide ring at the terminal olefin of the geranylgeranyl group; and the terpene cyclase Cle7 that catalyzes the cyclization of the prenyl group that yields the pentacyclic pathway intermediate chevalone E. Chevalone E can derivatize into seven new oxidized analogs by the cytochrome P450 monooxygenases cle2 (acting at C-20) and cle4 (acting at C-11 and C-12). This Aspergillus versicolor protein is Polyprenyl transferase cle5.